The sequence spans 321 residues: Phosphate-import protein PhnD (321 aa).

A signal peptide spans 1–22; sequence MKIRAHHKIATAAACVALLASA. Cysteine 23 is lipidated: N-palmitoyl cysteine. The S-diacylglycerol cysteine moiety is linked to residue cysteine 23.

This sequence belongs to the phosphate/phosphite/phosphonate binding protein family. In terms of assembly, the complex is composed of two ATP-binding proteins (PhnC), two transmembrane proteins (PhnE) and a solute-binding protein (PhnD).

It localises to the cell membrane. Functionally, part of the ABC transporter complex PhnCDE involved in phosphate import. Responsible for phosphate binding. The polypeptide is Phosphate-import protein PhnD (phnD) (Mycolicibacterium smegmatis (strain ATCC 700084 / mc(2)155) (Mycobacterium smegmatis)).